We begin with the raw amino-acid sequence, 285 residues long: Bifunctional protein FolD (285 aa).

NADP(+)-binding positions include 166 to 168 (GRS), Ser-191, and Thr-232.

Belongs to the tetrahydrofolate dehydrogenase/cyclohydrolase family. As to quaternary structure, homodimer.

It catalyses the reaction (6R)-5,10-methylene-5,6,7,8-tetrahydrofolate + NADP(+) = (6R)-5,10-methenyltetrahydrofolate + NADPH. The enzyme catalyses (6R)-5,10-methenyltetrahydrofolate + H2O = (6R)-10-formyltetrahydrofolate + H(+). The protein operates within one-carbon metabolism; tetrahydrofolate interconversion. Its function is as follows. Catalyzes the oxidation of 5,10-methylenetetrahydrofolate to 5,10-methenyltetrahydrofolate and then the hydrolysis of 5,10-methenyltetrahydrofolate to 10-formyltetrahydrofolate. The polypeptide is Bifunctional protein FolD (Chloroflexus aurantiacus (strain ATCC 29366 / DSM 635 / J-10-fl)).